The following is a 419-amino-acid chain: Serine hydroxymethyltransferase (419 aa).

(6S)-5,6,7,8-tetrahydrofolate contacts are provided by residues leucine 121 and 125-127 (GHL). Residue lysine 231 is modified to N6-(pyridoxal phosphate)lysine.

Belongs to the SHMT family. In terms of assembly, homodimer. The cofactor is pyridoxal 5'-phosphate.

The protein localises to the cytoplasm. The enzyme catalyses (6R)-5,10-methylene-5,6,7,8-tetrahydrofolate + glycine + H2O = (6S)-5,6,7,8-tetrahydrofolate + L-serine. It participates in one-carbon metabolism; tetrahydrofolate interconversion. The protein operates within amino-acid biosynthesis; glycine biosynthesis; glycine from L-serine: step 1/1. Functionally, catalyzes the reversible interconversion of serine and glycine with tetrahydrofolate (THF) serving as the one-carbon carrier. This reaction serves as the major source of one-carbon groups required for the biosynthesis of purines, thymidylate, methionine, and other important biomolecules. Also exhibits THF-independent aldolase activity toward beta-hydroxyamino acids, producing glycine and aldehydes, via a retro-aldol mechanism. The sequence is that of Serine hydroxymethyltransferase from Phytoplasma mali (strain AT).